The chain runs to 586 residues: Arginine--tRNA ligase (586 aa).

A 'HIGH' region motif is present at residues 131-141; it reads ANPTGPMHVGH.

This sequence belongs to the class-I aminoacyl-tRNA synthetase family. Monomer.

The protein resides in the cytoplasm. It catalyses the reaction tRNA(Arg) + L-arginine + ATP = L-arginyl-tRNA(Arg) + AMP + diphosphate. The sequence is that of Arginine--tRNA ligase from Rhizobium rhizogenes (strain K84 / ATCC BAA-868) (Agrobacterium radiobacter).